The following is a 171-amino-acid chain: Shikimate kinase (171 aa).

11–16 contributes to the ATP binding site; the sequence is ATGKTT. Position 15 (threonine 15) interacts with Mg(2+). Aspartate 33, arginine 57, and glycine 79 together coordinate substrate. Position 117 (arginine 117) interacts with ATP. Arginine 136 contacts substrate.

This sequence belongs to the shikimate kinase family. In terms of assembly, monomer. The cofactor is Mg(2+).

It localises to the cytoplasm. It carries out the reaction shikimate + ATP = 3-phosphoshikimate + ADP + H(+). Its pathway is metabolic intermediate biosynthesis; chorismate biosynthesis; chorismate from D-erythrose 4-phosphate and phosphoenolpyruvate: step 5/7. Its function is as follows. Catalyzes the specific phosphorylation of the 3-hydroxyl group of shikimic acid using ATP as a cosubstrate. The polypeptide is Shikimate kinase (Thermoanaerobacter pseudethanolicus (strain ATCC 33223 / 39E) (Clostridium thermohydrosulfuricum)).